The primary structure comprises 34 residues: Photosystem II reaction center protein M (34 aa).

The helical transmembrane segment at 7-27 threads the bilayer; the sequence is GFIATILFVLVPTVFLLILYI.

It belongs to the PsbM family. As to quaternary structure, PSII is composed of 1 copy each of membrane proteins PsbA, PsbB, PsbC, PsbD, PsbE, PsbF, PsbH, PsbI, PsbJ, PsbK, PsbL, PsbM, PsbT, PsbX, PsbY, PsbZ, Psb30/Ycf12, peripheral proteins PsbO, CyanoQ (PsbQ), PsbU, PsbV and a large number of cofactors. It forms dimeric complexes.

Its subcellular location is the cellular thylakoid membrane. Functionally, one of the components of the core complex of photosystem II (PSII). PSII is a light-driven water:plastoquinone oxidoreductase that uses light energy to abstract electrons from H(2)O, generating O(2) and a proton gradient subsequently used for ATP formation. It consists of a core antenna complex that captures photons, and an electron transfer chain that converts photonic excitation into a charge separation. This subunit is found at the monomer-monomer interface. The polypeptide is Photosystem II reaction center protein M (Picosynechococcus sp. (strain ATCC 27264 / PCC 7002 / PR-6) (Agmenellum quadruplicatum)).